The sequence spans 227 residues: ATP synthase F(0) complex subunit a (227 aa).

Transmembrane regions (helical) follow at residues 13–33 (YLLGIPLILVAMLLPWLLFPA), 69–89 (WALLFASLMVFLITINLLGLL), 98–118 (QLSLNMGFAVPLWLATVIIGM), 132–152 (EGTPIPLIPALIIIETISLFI), 179–199 (VFVLLPMMPAVAILTASVLFL), and 202–222 (LLEVAVAMIQAYVFILLLSLY).

This sequence belongs to the ATPase A chain family. Component of the ATP synthase complex composed at least of ATP5F1A/subunit alpha, ATP5F1B/subunit beta, ATP5MC1/subunit c (homooctomer), MT-ATP6/subunit a, MT-ATP8/subunit 8, ATP5ME/subunit e, ATP5MF/subunit f, ATP5MG/subunit g, ATP5MK/subunit k, ATP5MJ/subunit j, ATP5F1C/subunit gamma, ATP5F1D/subunit delta, ATP5F1E/subunit epsilon, ATP5PF/subunit F6, ATP5PB/subunit b, ATP5PD/subunit d, ATP5PO/subunit OSCP. ATP synthase complex consists of a soluble F(1) head domain (subunits alpha(3) and beta(3)) - the catalytic core - and a membrane F(0) domain - the membrane proton channel (subunits c, a, 8, e, f, g, k and j). These two domains are linked by a central stalk (subunits gamma, delta, and epsilon) rotating inside the F1 region and a stationary peripheral stalk (subunits F6, b, d, and OSCP). Interacts with DNAJC30; interaction is direct.

The protein resides in the mitochondrion inner membrane. The enzyme catalyses H(+)(in) = H(+)(out). Its function is as follows. Subunit a, of the mitochondrial membrane ATP synthase complex (F(1)F(0) ATP synthase or Complex V) that produces ATP from ADP in the presence of a proton gradient across the membrane which is generated by electron transport complexes of the respiratory chain. ATP synthase complex consist of a soluble F(1) head domain - the catalytic core - and a membrane F(1) domain - the membrane proton channel. These two domains are linked by a central stalk rotating inside the F(1) region and a stationary peripheral stalk. During catalysis, ATP synthesis in the catalytic domain of F(1) is coupled via a rotary mechanism of the central stalk subunits to proton translocation. With the subunit c (ATP5MC1), forms the proton-conducting channel in the F(0) domain, that contains two crucial half-channels (inlet and outlet) that facilitate proton movement from the mitochondrial intermembrane space (IMS) into the matrix. Protons are taken up via the inlet half-channel and released through the outlet half-channel, following a Grotthuss mechanism. This Danio rerio (Zebrafish) protein is ATP synthase F(0) complex subunit a.